Here is a 177-residue protein sequence, read N- to C-terminus: Dual-action ribosomal maturation protein DarP (177 aa).

This sequence belongs to the DarP family.

The protein localises to the cytoplasm. Member of a network of 50S ribosomal subunit biogenesis factors which assembles along the 30S-50S interface, preventing incorrect 23S rRNA structures from forming. Promotes peptidyl transferase center (PTC) maturation. The sequence is that of Dual-action ribosomal maturation protein DarP from Glaesserella parasuis serovar 5 (strain SH0165) (Haemophilus parasuis).